A 420-amino-acid chain; its full sequence is Vasopressin V1a receptor (420 aa).

Residues 1–20 are disordered; sequence MSFPRGSYDPAASNSSPWWP. Residues 1 to 54 lie on the Extracellular side of the membrane; it reads MSFPRGSYDPAASNSSPWWPLSAEDANSSWEAAGHQKGSDPSGDVRNEELAKLE. N27 is a glycosylation site (N-linked (GlcNAc...) asparagine). A helical membrane pass occupies residues 55 to 75; sequence IAVLAVIFVVAVLGNSSVLLA. Topologically, residues 76–92 are cytoplasmic; it reads LHRTPRKTSRMHLFIRH. A helical transmembrane segment spans residues 93–113; sequence LSLADLAVAFFQVLPQLCWDI. Residues 114–125 lie on the Extracellular side of the membrane; it reads TYRFRGPDWLCR. Residues C124 and C205 are joined by a disulfide bond. Residues 126–146 traverse the membrane as a helical segment; that stretch reads VVKHLQVFAMFASAYMLVVMT. Residues 147–168 are Cytoplasmic-facing; sequence ADRYIAVCHPLKTLQQPTRRSR. Residues 169-189 form a helical membrane-spanning segment; the sequence is LMIAASWVLSFLLSTPQYFIF. Residues 190–225 lie on the Extracellular side of the membrane; the sequence is SMIEIEVNNGTKTQDCWATFIQPWGTRAYVTWMTSG. N198 is a glycosylation site (N-linked (GlcNAc...) asparagine). A helical transmembrane segment spans residues 226 to 246; it reads VFVVPVVILGTCYGFICYHIW. Topologically, residues 247–294 are cytoplasmic; that stretch reads RNVRGKTASRQSKGSGEDVAPFHKGLLVTPCVSSVKTISRAKIRTVKM. Residues 295 to 315 form a helical membrane-spanning segment; that stretch reads TFVIVTAYILCWAPFFIVQMW. The Extracellular portion of the chain corresponds to 316–331; sequence SVWDDNFIWTDSENPS. The helical transmembrane segment at 332-352 threads the bilayer; that stretch reads ITITALLASLNSCCNPWIYMF. Residues 353–420 lie on the Cytoplasmic side of the membrane; that stretch reads FSGHLLQDCV…RSIRFIPVST (68 aa). 2 S-palmitoyl cysteine lipidation sites follow: C367 and C368. Positions 379 to 411 are disordered; it reads DSDNMSRRHTSYSNNRSPTNSTGTWKDSPKSSR. A compositionally biased stretch (polar residues) spans 389–403; that stretch reads SYSNNRSPTNSTGTW. S406 is modified (phosphoserine).

It belongs to the G-protein coupled receptor 1 family. Vasopressin/oxytocin receptor subfamily.

The protein localises to the cell membrane. Receptor for arginine vasopressin. The activity of this receptor is mediated by G proteins which activate a phosphatidyl-inositol-calcium second messenger system. Involved in social memory formation. In Microtus ochrogaster (Prairie vole), this protein is Vasopressin V1a receptor (Avpr1a).